Here is a 172-residue protein sequence, read N- to C-terminus: Adenine phosphoribosyltransferase (172 aa).

The protein belongs to the purine/pyrimidine phosphoribosyltransferase family. In terms of assembly, homodimer.

The protein resides in the cytoplasm. The catalysed reaction is AMP + diphosphate = 5-phospho-alpha-D-ribose 1-diphosphate + adenine. It participates in purine metabolism; AMP biosynthesis via salvage pathway; AMP from adenine: step 1/1. In terms of biological role, catalyzes a salvage reaction resulting in the formation of AMP, that is energically less costly than de novo synthesis. The chain is Adenine phosphoribosyltransferase from Parasynechococcus marenigrum (strain WH8102).